The following is a 156-amino-acid chain: ATP synthase subunit b (156 aa).

Residues 7–29 form a helical membrane-spanning segment; sequence LFGQTVAFILFVWFCMKFVWPPL.

The protein belongs to the ATPase B chain family. As to quaternary structure, F-type ATPases have 2 components, F(1) - the catalytic core - and F(0) - the membrane proton channel. F(1) has five subunits: alpha(3), beta(3), gamma(1), delta(1), epsilon(1). F(0) has three main subunits: a(1), b(2) and c(10-14). The alpha and beta chains form an alternating ring which encloses part of the gamma chain. F(1) is attached to F(0) by a central stalk formed by the gamma and epsilon chains, while a peripheral stalk is formed by the delta and b chains.

Its subcellular location is the cell inner membrane. Its function is as follows. F(1)F(0) ATP synthase produces ATP from ADP in the presence of a proton or sodium gradient. F-type ATPases consist of two structural domains, F(1) containing the extramembraneous catalytic core and F(0) containing the membrane proton channel, linked together by a central stalk and a peripheral stalk. During catalysis, ATP synthesis in the catalytic domain of F(1) is coupled via a rotary mechanism of the central stalk subunits to proton translocation. Functionally, component of the F(0) channel, it forms part of the peripheral stalk, linking F(1) to F(0). The chain is ATP synthase subunit b from Shewanella frigidimarina (strain NCIMB 400).